We begin with the raw amino-acid sequence, 325 residues long: ATP phosphoribosyltransferase (325 aa).

It belongs to the ATP phosphoribosyltransferase family. Long subfamily. Mg(2+) is required as a cofactor.

It localises to the cytoplasm. The enzyme catalyses 1-(5-phospho-beta-D-ribosyl)-ATP + diphosphate = 5-phospho-alpha-D-ribose 1-diphosphate + ATP. Its pathway is amino-acid biosynthesis; L-histidine biosynthesis; L-histidine from 5-phospho-alpha-D-ribose 1-diphosphate: step 1/9. Feedback inhibited by histidine. Catalyzes the condensation of ATP and 5-phosphoribose 1-diphosphate to form N'-(5'-phosphoribosyl)-ATP (PR-ATP). Has a crucial role in the pathway because the rate of histidine biosynthesis seems to be controlled primarily by regulation of HisG enzymatic activity. The chain is ATP phosphoribosyltransferase from Nitrobacter winogradskyi (strain ATCC 25391 / DSM 10237 / CIP 104748 / NCIMB 11846 / Nb-255).